The primary structure comprises 444 residues: Homocysteine/cysteine synthase (444 aa).

Ser-44 is modified (phosphoserine). A Glycyl lysine isopeptide (Lys-Gly) (interchain with G-Cter in ubiquitin) cross-link involves residue Lys-160. Lys-209 is modified (N6-(pyridoxal phosphate)lysine).

This sequence belongs to the trans-sulfuration enzymes family. Homotetramer. Pyridoxal 5'-phosphate is required as a cofactor.

It localises to the cytoplasm. The catalysed reaction is O-acetyl-L-homoserine + methanethiol = L-methionine + acetate + H(+). It catalyses the reaction O-acetyl-L-homoserine + hydrogen sulfide = L-homocysteine + acetate. The enzyme catalyses O-acetyl-L-serine + hydrogen sulfide = L-cysteine + acetate. It participates in amino-acid biosynthesis; L-methionine biosynthesis via de novo pathway; L-homocysteine from O-acetyl-L-homoserine. Functionally, catalyzes the conversion of O-acetyl-L-homoserine (OAH) into homocysteine in the methionine biosynthesis pathway. Required to efficiently reduce toxic levels of hydrogen sulfide generated when the sulfate assimilation pathway (SAP) is active. Also catalyzes the conversion of O-acetylserine (OAS) into cysteine, the last step in the cysteine biosynthesis pathway. However, it seems that in S.cerevisiae cysteine biosynthesis occurs exclusively through the cystathionine pathway and not via direct incorporation of sulfur into OAS. It therefore has no metabolic role in cysteine biosynthesis and may only have a regulatory role controlling OAS levels. In Saccharomyces cerevisiae (strain ATCC 204508 / S288c) (Baker's yeast), this protein is Homocysteine/cysteine synthase.